The chain runs to 60 residues: MDPCECSKTGKCSCGGSCTCTNCSCTSCKKSCCPCCPSGCSKCASGCVCKGKTCDTSCCQ.

The segment at 1–28 (MDPCECSKTGKCSCGGSCTCTNCSCTSC) is beta. Residues Cys4, Cys6, Cys12, Cys14, Cys18, Cys20, Cys23, Cys25, Cys28, Cys32, Cys33, Cys35, Cys36, Cys40, Cys43, Cys47, Cys49, Cys54, Cys58, and Cys59 each contribute to the a divalent metal cation site. An alpha region spans residues 29 to 60 (KKSCCPCCPSGCSKCASGCVCKGKTCDTSCCQ).

This sequence belongs to the metallothionein superfamily. Type 1 family.

Its function is as follows. Metallothioneins have a high content of cysteine residues that bind various heavy metals. The polypeptide is Metallothionein (mt) (Chelon auratus (Golden grey mullet)).